Reading from the N-terminus, the 425-residue chain is Cell adhesion molecule CEACAM16 (425 aa).

The first 20 residues, 1–20 (MALTGYSWLLLSATFLNVGA), serve as a signal peptide directing secretion. The N-linked (GlcNAc...) asparagine glycan is linked to Asn36. 2 Ig-like C2-type domains span residues 133-218 (PTVL…INLT) and 223-309 (PERV…ASVV). Cysteines 153 and 201 form a disulfide. Asn216 carries an N-linked (GlcNAc...) asparagine glycan. Cys252 and Cys293 are oxidised to a cystine. N-linked (GlcNAc...) asparagine glycosylation is present at Asn394.

It belongs to the immunoglobulin superfamily. CEA family. In terms of assembly, homooligomer; can for homodimers and homotetramers. Interacts with TECTA and TECTB.

The protein resides in the secreted. Functionally, required for proper hearing, plays a role in maintaining the integrity of the tectorial membrane. The sequence is that of Cell adhesion molecule CEACAM16 from Homo sapiens (Human).